A 213-amino-acid chain; its full sequence is Nicolin-1 (213 aa).

As to quaternary structure, part of the neuronal tubulin polyglutamylase complex which contains TPGS1, TPGS2, TTLL1, LRRC49 and NICN1. As to expression, high expression level is found in brain, testis, liver and kidney. Weak expression in spleen, leukocytes, small intestin and colon.

The protein resides in the nucleus. This is Nicolin-1 (Nicn1) from Mus musculus (Mouse).